A 154-amino-acid chain; its full sequence is Regulatory protein RecX (154 aa).

The protein belongs to the RecX family.

The protein resides in the cytoplasm. In terms of biological role, modulates RecA activity. This is Regulatory protein RecX from Trichlorobacter lovleyi (strain ATCC BAA-1151 / DSM 17278 / SZ) (Geobacter lovleyi).